The chain runs to 251 residues: Probable transcriptional regulatory protein BLD_0450 (251 aa).

Belongs to the TACO1 family.

It localises to the cytoplasm. The chain is Probable transcriptional regulatory protein BLD_0450 from Bifidobacterium longum (strain DJO10A).